A 294-amino-acid polypeptide reads, in one-letter code: UPF0761 membrane protein YPTS_0028 (294 aa).

Helical transmembrane passes span 44 to 64 (LLSLVPLITVIFALFAAFPMF), 67 to 87 (ISIKLKAFIFANFIPATGDII), 108 to 128 (GLIVTALLLIYSVDSVLNIIW), 136 to 156 (LVFSFAVYWMVLTLGPILVGA), 185 to 205 (VFPLLISWVSFWLLYSVVPTV), 212 to 232 (ALIGALVAALLFELGKKGFAM), and 246 to 266 (VLAVIPILFLWVYWSWCIVLL).

It belongs to the UPF0761 family.

The protein resides in the cell inner membrane. In Yersinia pseudotuberculosis serotype IB (strain PB1/+), this protein is UPF0761 membrane protein YPTS_0028.